We begin with the raw amino-acid sequence, 615 residues long: Afadin- and alpha-actinin-binding protein (615 aa).

Coiled-coil stretches lie at residues 126–227 and 266–293; these read KLGS…IAMD and RQKQ…SLLS. Phosphoserine is present on residues Ser290, Ser293, Ser313, and Ser319. Residues 293-316 are disordered; that stretch reads SPQKKKPRERAEDGTGTVAISDIE. Residues 375–461 adopt a coiled-coil conformation; that stretch reads ISRQDHEQET…RSFTEAAIRL (87 aa). Phosphoserine occurs at positions 537, 541, and 543. The segment at 567-615 is disordered; that stretch reads PEESKPSEVARESTDQKWSVQSRPSSREGCYSGCSSAFRSAHGDRDDLP. The segment covering 568-581 has biased composition (basic and acidic residues); that stretch reads EESKPSEVARESTD.

Belongs to the ADIP family. As to quaternary structure, interacts with SSX2 and SSX3. Does not interact with SSX1 and SSX4. Interacts with afadin and alpha-actinin. Interacts with VAV2. Interacts with PCM1. Interacts with WRAP73. In terms of tissue distribution, widely expressed.

Its subcellular location is the cell junction. It localises to the adherens junction. The protein resides in the nucleus. The protein localises to the cytoplasm. It is found in the cytoskeleton. Its subcellular location is the microtubule organizing center. It localises to the centrosome. The protein resides in the centriolar satellite. The protein localises to the cilium basal body. Its function is as follows. Belongs to an adhesion system, which plays a role in the organization of homotypic, interneuronal and heterotypic cell-cell adherens junctions (AJs). May connect the nectin-afadin and E-cadherin-catenin system through alpha-actinin and may be involved in organization of the actin cytoskeleton at AJs through afadin and alpha-actinin. Acts as a centrosome maturation factor, probably by maintaining the integrity of the pericentriolar material and proper microtubule nucleation at mitotic spindle poles. The function seems to implicate at least in part WRAP73; the SSX2IP:WRAP73 complex is proposed to act as regulator of spindle anchoring at the mitotic centrosome. Involved in cell movement: localizes at the leading edge of moving cells in response to PDGF and is required for the formation of the leading edge and the promotion of cell movement, possibly via activation of Rac signaling. Involved in ciliogenesis. It is required for targeted recruitment of the BBSome, CEP290, RAB8, and SSTR3 to the cilia. This Mus musculus (Mouse) protein is Afadin- and alpha-actinin-binding protein (Ssx2ip).